Reading from the N-terminus, the 481-residue chain is ATP synthase subunit beta (481 aa).

ATP is bound at residue 160-167; sequence GGAGVGKT.

This sequence belongs to the ATPase alpha/beta chains family. In terms of assembly, F-type ATPases have 2 components, CF(1) - the catalytic core - and CF(0) - the membrane proton channel. CF(1) has five subunits: alpha(3), beta(3), gamma(1), delta(1), epsilon(1). CF(0) has three main subunits: a(1), b(2) and c(9-12). The alpha and beta chains form an alternating ring which encloses part of the gamma chain. CF(1) is attached to CF(0) by a central stalk formed by the gamma and epsilon chains, while a peripheral stalk is formed by the delta and b chains.

The protein resides in the cell inner membrane. The catalysed reaction is ATP + H2O + 4 H(+)(in) = ADP + phosphate + 5 H(+)(out). Produces ATP from ADP in the presence of a proton gradient across the membrane. The catalytic sites are hosted primarily by the beta subunits. This Myxococcus xanthus (strain DK1622) protein is ATP synthase subunit beta.